Consider the following 251-residue polypeptide: Spermatogenesis-associated protein 46 (251 aa).

It is found in the nucleus membrane. Functionally, plays a role in spermiogenesis and fertilization. The polypeptide is Spermatogenesis-associated protein 46 (SPATA46) (Macaca fascicularis (Crab-eating macaque)).